A 398-amino-acid chain; its full sequence is DNA-directed RNA polymerase III subunit RPC4 (398 aa).

The tract at residues 1–114 (MSEGNAAGEP…SHSIFEQGPA (114 aa)) is disordered. S2 carries the post-translational modification N-acetylserine. Phosphoserine is present on S42. Basic and acidic residues predominate over residues 66 to 100 (KIKEEPKEEVTVKKEKRERDRDRQREGHGRGRGRP). Residues K68 and K78 each participate in a glycyl lysine isopeptide (Lys-Gly) (interchain with G-Cter in SUMO2) cross-link. R95, R97, and R99 each carry omega-N-methylarginine. Glycyl lysine isopeptide (Lys-Gly) (interchain with G-Cter in SUMO2) cross-links involve residues K141, K152, K160, K190, K199, K206, K220, K285, K302, K310, and K396. Positions 220–244 (KEEPRDEEEEAKMKAPPKAARKTPG) are disordered.

It belongs to the eukaryotic RPC4/POLR3D RNA polymerase subunit family. As to quaternary structure, component of the RNA polymerase III complex consisting of 17 subunits: a ten-subunit horseshoe-shaped catalytic core composed of POLR3A/RPC1, POLR3B/RPC2, POLR1C/RPAC1, POLR1D/RPAC2, POLR3K/RPC10, POLR2E/RPABC1, POLR2F/RPABC2, POLR2H/RPABC3, POLR2K/RPABC4 and POLR2L/RPABC5; a mobile stalk composed of two subunits POLR3H/RPC8 and CRCP/RPC9, protruding from the core and functioning primarily in transcription initiation; and additional subunits homologous to general transcription factors of the RNA polymerase II machinery, POLR3C/RPC3-POLR3F/RPC6-POLR3G/RPC7 heterotrimer required for transcription initiation and POLR3D/RPC4-POLR3E/RPC5 heterodimer involved in both transcription initiation and termination. Sumoylation on Lys-141 can serve as a signal to mark misfolded Pol III for proteasomal degradation.

The protein resides in the nucleus. Its function is as follows. DNA-dependent RNA polymerase catalyzes the transcription of DNA into RNA using the four ribonucleoside triphosphates as substrates. Specific peripheric component of RNA polymerase III (Pol III) which synthesizes small non-coding RNAs including 5S rRNA, snRNAs, tRNAs and miRNAs from at least 500 distinct genomic loci. Assembles with POLR3E/RPC5 forming a subcomplex that binds the Pol III core. Enables recruitment of Pol III at transcription initiation site and drives transcription initiation from both type 2 and type 3 DNA promoters. Required for efficient transcription termination and reinitiation. Pol III plays a key role in sensing and limiting infection by intracellular bacteria and DNA viruses. Acts as nuclear and cytosolic DNA sensor involved in innate immune response. Can sense non-self dsDNA that serves as template for transcription into dsRNA. The non-self RNA polymerase III transcripts, such as Epstein-Barr virus-encoded RNAs (EBERs) induce type I interferon and NF-kappa-B through the RIG-I pathway. The protein is DNA-directed RNA polymerase III subunit RPC4 of Homo sapiens (Human).